Here is a 212-residue protein sequence, read N- to C-terminus: Peptide methionine sulfoxide reductase MsrA (212 aa).

The active site involves Cys-52.

It belongs to the MsrA Met sulfoxide reductase family.

The enzyme catalyses L-methionyl-[protein] + [thioredoxin]-disulfide + H2O = L-methionyl-(S)-S-oxide-[protein] + [thioredoxin]-dithiol. It carries out the reaction [thioredoxin]-disulfide + L-methionine + H2O = L-methionine (S)-S-oxide + [thioredoxin]-dithiol. Has an important function as a repair enzyme for proteins that have been inactivated by oxidation. Catalyzes the reversible oxidation-reduction of methionine sulfoxide in proteins to methionine. The protein is Peptide methionine sulfoxide reductase MsrA of Cronobacter sakazakii (strain ATCC BAA-894) (Enterobacter sakazakii).